Here is a 720-residue protein sequence, read N- to C-terminus: 1,4-alpha-glucan branching enzyme GlgB 2 (720 aa).

The active-site Nucleophile is the aspartate 398. Glutamate 451 (proton donor) is an active-site residue.

This sequence belongs to the glycosyl hydrolase 13 family. GlgB subfamily. In terms of assembly, monomer.

It carries out the reaction Transfers a segment of a (1-&gt;4)-alpha-D-glucan chain to a primary hydroxy group in a similar glucan chain.. The protein operates within glycan biosynthesis; glycogen biosynthesis. Functionally, catalyzes the formation of the alpha-1,6-glucosidic linkages in glycogen by scission of a 1,4-alpha-linked oligosaccharide from growing alpha-1,4-glucan chains and the subsequent attachment of the oligosaccharide to the alpha-1,6 position. The protein is 1,4-alpha-glucan branching enzyme GlgB 2 of Xanthomonas oryzae pv. oryzae (strain KACC10331 / KXO85).